We begin with the raw amino-acid sequence, 189 residues long: MSLINKEILPFTAQAYDPKKDEFKEVTQEDFKGSWNVVCFYPADFSFVCPTELEDLQNQYAKLQELGVNVYSVSTDTHFVHKAWHDHSDAISKLEYSMIGDPSQTITRNFDVLDEESGLAQRGTFIIDPDGVVQAAEINADGIGRDASTLVNKIKAAQYVRQHPGEVCPAKWEEGSESLQPGLDLVGKI.

The region spanning 2 to 159 (SLINKEILPF…LVNKIKAAQY (158 aa)) is the Thioredoxin domain. Catalysis depends on Cys49, which acts as the Cysteine sulfenic acid (-SOH) intermediate.

The protein belongs to the peroxiredoxin family. AhpC/Prx1 subfamily. In terms of assembly, homodimer; disulfide-linked, upon oxidation. 5 homodimers assemble to form a ring-like decamer.

Its subcellular location is the cytoplasm. It carries out the reaction a hydroperoxide + NADH + H(+) = an alcohol + NAD(+) + H2O. Its function is as follows. Thiol-specific peroxidase that catalyzes the reduction of hydrogen peroxide and organic hydroperoxides to water and alcohols, respectively. Plays a role in cell protection against oxidative stress by detoxifying peroxides. This Staphylococcus epidermidis (strain ATCC 12228 / FDA PCI 1200) protein is Alkyl hydroperoxide reductase C (ahpC).